A 969-amino-acid chain; its full sequence is Exoribonuclease II, mitochondrial (969 aa).

Residues 1 to 41 (MVVRRKVHVLLIARSFHSYTPCFRVTTRGKRQRSKSKQQAK) constitute a mitochondrion transit peptide. The segment covering 28–38 (RGKRQRSKSKQ) has biased composition (basic residues). The segment at 28 to 54 (RGKRQRSKSKQQAKVELDHTRELDNDQ) is disordered. The segment covering 40–51 (AKVELDHTRELD) has biased composition (basic and acidic residues). In terms of domain architecture, RNB spans 522 to 853 (RYDFGDLRVF…NHLQIHRHLQ (332 aa)).

The protein belongs to the RNR ribonuclease family. In terms of assembly, MSU1 and SUV3 are the two components of the mitochondrial degradosome (mtEXO).

It localises to the mitochondrion matrix. The catalysed reaction is Exonucleolytic cleavage in the 3'- to 5'-direction to yield nucleoside 5'-phosphates.. Its function is as follows. Essential for mitochondrial biogenesis. Required for intron-independent turnover and processing of mitochondrial RNA. Participates in 3' mtRNA processing where it hydrolyzes single-stranded RNA or partially double-stranded RNA with 3' single-stranded tails. The protein is Exoribonuclease II, mitochondrial (DSS1) of Saccharomyces cerevisiae (strain ATCC 204508 / S288c) (Baker's yeast).